A 287-amino-acid chain; its full sequence is Ferredoxin-type protein NapH (287 aa).

Topologically, residues 1 to 29 (MANRKRDAGREALEKKGWWRSHRWLVLRR) are cytoplasmic. A helical membrane pass occupies residues 30–50 (LCQFFVLGMFLSGPWFGVWIL). Topologically, residues 51-79 (HGNYSSSLLFDTVPLTDPLMTLQSLASGH) are periplasmic. The helical transmembrane segment at 80-100 (LPATVALTGAVIITVLYALAG) threads the bilayer. Residues 101–139 (KRLFCSWVCPLNPITDLANWLRRRFDLNQSATIPRHIRY) lie on the Cytoplasmic side of the membrane. A helical transmembrane segment spans residues 140–160 (VLLVVILVGSALTGTLIWEWI). Residues 161-170 (NPVSLMGRSL) lie on the Periplasmic side of the membrane. Residues 171–191 (VMGFGSGALLILALFLFDLLV) traverse the membrane as a helical segment. Topologically, residues 192-287 (VEHGWCGHIC…TTRWSSGAKS (96 aa)) are cytoplasmic. 4Fe-4S ferredoxin-type domains are found at residues 217–247 (TVAATDRQKCNRCMDCFHVCPEPHVLRAPVL) and 251–280 (SPVQVTSRDCMTCGRCVDVCSEDVFTITTR). Cys226, Cys229, Cys232, Cys236, Cys260, Cys263, Cys266, and Cys270 together coordinate [4Fe-4S] cluster.

As to quaternary structure, interacts with NapC. The cofactor is [4Fe-4S] cluster.

The protein resides in the cell inner membrane. Functionally, required for electron transfer from ubiquinol, via NapC, to the periplasmic nitrate reductase NapAB complex. In Escherichia coli (strain K12), this protein is Ferredoxin-type protein NapH (napH).